Consider the following 680-residue polypeptide: DNA-directed RNA polymerase subunit beta' (680 aa).

Zn(2+) contacts are provided by C69, C71, C87, and C90. Residues D489, D491, and D493 each contribute to the Mg(2+) site.

It belongs to the RNA polymerase beta' chain family. RpoC1 subfamily. As to quaternary structure, in plastids the minimal PEP RNA polymerase catalytic core is composed of four subunits: alpha, beta, beta', and beta''. When a (nuclear-encoded) sigma factor is associated with the core the holoenzyme is formed, which can initiate transcription. Mg(2+) is required as a cofactor. It depends on Zn(2+) as a cofactor.

The protein resides in the plastid. The protein localises to the chloroplast. The catalysed reaction is RNA(n) + a ribonucleoside 5'-triphosphate = RNA(n+1) + diphosphate. Functionally, DNA-dependent RNA polymerase catalyzes the transcription of DNA into RNA using the four ribonucleoside triphosphates as substrates. The polypeptide is DNA-directed RNA polymerase subunit beta' (Citrus sinensis (Sweet orange)).